The chain runs to 159 residues: uncharacterized protein (159 aa).

Belongs to the SufE family.

This is an uncharacterized protein from Synechocystis sp. (strain ATCC 27184 / PCC 6803 / Kazusa).